The chain runs to 718 residues: Catalase-peroxidase (718 aa).

Positions 92–220 (WHAAGTYRTA…LASVMMGLIY (129 aa)) form a cross-link, tryptophyl-tyrosyl-methioninium (Trp-Tyr) (with M-246). His-93 (proton acceptor) is an active-site residue. The tryptophyl-tyrosyl-methioninium (Tyr-Met) (with W-92) cross-link spans 220–246 (YVNPEGVDGHPDPLKTANDVRVTFERM). Position 261 (His-261) interacts with heme b.

This sequence belongs to the peroxidase family. Peroxidase/catalase subfamily. In terms of assembly, homodimer or homotetramer. It depends on heme b as a cofactor. In terms of processing, formation of the three residue Trp-Tyr-Met cross-link is important for the catalase, but not the peroxidase activity of the enzyme.

It catalyses the reaction H2O2 + AH2 = A + 2 H2O. The catalysed reaction is 2 H2O2 = O2 + 2 H2O. In terms of biological role, bifunctional enzyme with both catalase and broad-spectrum peroxidase activity. This Shewanella halifaxensis (strain HAW-EB4) protein is Catalase-peroxidase.